Reading from the N-terminus, the 185-residue chain is Elongation factor P 1 (185 aa).

Belongs to the elongation factor P family.

The protein localises to the cytoplasm. It functions in the pathway protein biosynthesis; polypeptide chain elongation. In terms of biological role, involved in peptide bond synthesis. Stimulates efficient translation and peptide-bond synthesis on native or reconstituted 70S ribosomes in vitro. Probably functions indirectly by altering the affinity of the ribosome for aminoacyl-tRNA, thus increasing their reactivity as acceptors for peptidyl transferase. This Chlamydia caviae (strain ATCC VR-813 / DSM 19441 / 03DC25 / GPIC) (Chlamydophila caviae) protein is Elongation factor P 1 (efp1).